The chain runs to 360 residues: GTP 3',8-cyclase (360 aa).

Residues 33–251 (RFGRSATDLR…LQPHFRLRPD (219 aa)) enclose the Radical SAM core domain. Arg-42 contacts GTP. [4Fe-4S] cluster contacts are provided by Cys-49 and Cys-53. Residue Tyr-55 coordinates S-adenosyl-L-methionine. Residue Cys-56 coordinates [4Fe-4S] cluster. Residue Arg-93 coordinates GTP. An S-adenosyl-L-methionine-binding site is contributed by Gly-97. Thr-124 is a binding site for GTP. Ser-148 is a binding site for S-adenosyl-L-methionine. A GTP-binding site is contributed by Lys-185. Met-219 contacts S-adenosyl-L-methionine. [4Fe-4S] cluster-binding residues include Cys-287 and Cys-290. 292–294 (RTR) provides a ligand contact to GTP. Cys-304 contacts [4Fe-4S] cluster.

Belongs to the radical SAM superfamily. MoaA family. In terms of assembly, monomer and homodimer. The cofactor is [4Fe-4S] cluster.

It carries out the reaction GTP + AH2 + S-adenosyl-L-methionine = (8S)-3',8-cyclo-7,8-dihydroguanosine 5'-triphosphate + 5'-deoxyadenosine + L-methionine + A + H(+). It participates in cofactor biosynthesis; molybdopterin biosynthesis. Functionally, catalyzes the cyclization of GTP to (8S)-3',8-cyclo-7,8-dihydroguanosine 5'-triphosphate. The polypeptide is GTP 3',8-cyclase (Mycobacterium marinum (strain ATCC BAA-535 / M)).